The chain runs to 101 residues: Integration host factor subunit beta (101 aa).

Belongs to the bacterial histone-like protein family. Heterodimer of an alpha and a beta chain.

In terms of biological role, this protein is one of the two subunits of integration host factor, a specific DNA-binding protein that functions in genetic recombination as well as in transcriptional and translational control. The sequence is that of Integration host factor subunit beta from Janthinobacterium sp. (strain Marseille) (Minibacterium massiliensis).